Consider the following 429-residue polypeptide: UDP-N-acetylglucosamine 1-carboxyvinyltransferase (429 aa).

Residue 22-23 (KN) participates in phosphoenolpyruvate binding. Arginine 102 is a UDP-N-acetyl-alpha-D-glucosamine binding site. The active-site Proton donor is the cysteine 126. Cysteine 126 is subject to 2-(S-cysteinyl)pyruvic acid O-phosphothioketal. UDP-N-acetyl-alpha-D-glucosamine contacts are provided by residues 131–135 (RPVDL), 171–174 (KVSV), aspartate 316, and isoleucine 338.

This sequence belongs to the EPSP synthase family. MurA subfamily.

The protein resides in the cytoplasm. The catalysed reaction is phosphoenolpyruvate + UDP-N-acetyl-alpha-D-glucosamine = UDP-N-acetyl-3-O-(1-carboxyvinyl)-alpha-D-glucosamine + phosphate. It functions in the pathway cell wall biogenesis; peptidoglycan biosynthesis. In terms of biological role, cell wall formation. Adds enolpyruvyl to UDP-N-acetylglucosamine. The polypeptide is UDP-N-acetylglucosamine 1-carboxyvinyltransferase (Brucella abortus (strain S19)).